The primary structure comprises 355 residues: Protein RecA (355 aa).

Residue 67 to 74 coordinates ATP; sequence GPESSGKT.

This sequence belongs to the RecA family.

Its subcellular location is the cytoplasm. Its function is as follows. Can catalyze the hydrolysis of ATP in the presence of single-stranded DNA, the ATP-dependent uptake of single-stranded DNA by duplex DNA, and the ATP-dependent hybridization of homologous single-stranded DNAs. It interacts with LexA causing its activation and leading to its autocatalytic cleavage. In Histophilus somni (strain 129Pt) (Haemophilus somnus), this protein is Protein RecA.